The chain runs to 378 residues: Chaperone protein DnaJ (378 aa).

The 66-residue stretch at 5–70 (DYYEVLGLQK…EKRAMYDQYG (66 aa)) folds into the J domain. A CR-type zinc finger spans residues 135–213 (GVKKDIRIRT…CHGDGRVEKT (79 aa)). Zn(2+) is bound by residues cysteine 148, cysteine 151, cysteine 165, cysteine 168, cysteine 187, cysteine 190, cysteine 201, and cysteine 204. 4 CXXCXGXG motif repeats span residues 148–155 (CDTCHGSG), 165–172 (CPHCHGSG), 187–194 (CPSCHGTG), and 201–208 (CKSCHGDG).

It belongs to the DnaJ family. Homodimer. Zn(2+) serves as cofactor.

Its subcellular location is the cytoplasm. Its function is as follows. Participates actively in the response to hyperosmotic and heat shock by preventing the aggregation of stress-denatured proteins and by disaggregating proteins, also in an autonomous, DnaK-independent fashion. Unfolded proteins bind initially to DnaJ; upon interaction with the DnaJ-bound protein, DnaK hydrolyzes its bound ATP, resulting in the formation of a stable complex. GrpE releases ADP from DnaK; ATP binding to DnaK triggers the release of the substrate protein, thus completing the reaction cycle. Several rounds of ATP-dependent interactions between DnaJ, DnaK and GrpE are required for fully efficient folding. Also involved, together with DnaK and GrpE, in the DNA replication of plasmids through activation of initiation proteins. This chain is Chaperone protein DnaJ, found in Glaesserella parasuis serovar 5 (strain SH0165) (Haemophilus parasuis).